Reading from the N-terminus, the 995-residue chain is tRNA wybutosine-synthesizing protein 2/3/4 (995 aa).

The tract at residues 1-212 is tRNA wybutosine-synthesizing protein 3 homolog; that stretch reads MDFEKRKAAT…GFSVALASNG (212 aa). Kelch repeat units follow at residues 284 to 335, 336 to 386, 387 to 436, 437 to 486, and 488 to 535; these read EVIV…MVGD, FMFV…SVGT, KVYI…AYGS, QSFM…VYKH, and IGII…SILG. The interval 661 to 995 is tRNA wybutosine-synthesizing protein 2 homolog; the sequence is ERSEENNLTK…RHLVADVRCR (335 aa). Residues K828 and 896–897 each bind S-adenosyl-L-methionine; that span reads DN.

It in the C-terminal section; belongs to the class I-like SAM-binding methyltransferase superfamily. TRM5/TYW2 family. In the N-terminal section; belongs to the TYW3 family.

The enzyme catalyses 4-demethyl-7-[(3S)-3-amino-3-carboxypropyl]wyosine(37) in tRNA(Phe) + S-adenosyl-L-methionine = 7-[(3S)-3-amino-3-carboxypropyl]wyosine(37) in tRNA(Phe) + S-adenosyl-L-homocysteine + H(+). It catalyses the reaction 4-demethylwyosine(37) in tRNA(Phe) + S-adenosyl-L-methionine = 4-demethyl-7-[(3S)-3-amino-3-carboxypropyl]wyosine(37) in tRNA(Phe) + S-methyl-5'-thioadenosine + H(+). It functions in the pathway tRNA modification; wybutosine-tRNA(Phe) biosynthesis. S-adenosyl-L-methionine-dependent transferase that acts as a component of the wybutosine biosynthesis pathway. Wybutosine is a hyper modified guanosine with a tricyclic base found at the 3'-position adjacent to the anticodon of eukaryotic phenylalanine tRNA. In Arabidopsis thaliana (Mouse-ear cress), this protein is tRNA wybutosine-synthesizing protein 2/3/4.